The primary structure comprises 168 residues: Transcriptional repressor NrdR (168 aa).

A zinc finger spans residues 3 to 34; it reads CPYCGFAQDRVVDSRESKEADSIRRRRECERC. The ATP-cone domain occupies 49-139; that stretch reads YMVVKKDGRR…VYRDFKDVNE (91 aa).

This sequence belongs to the NrdR family. Requires Zn(2+) as cofactor.

In terms of biological role, negatively regulates transcription of bacterial ribonucleotide reductase nrd genes and operons by binding to NrdR-boxes. This chain is Transcriptional repressor NrdR, found in Acidobacterium capsulatum (strain ATCC 51196 / DSM 11244 / BCRC 80197 / JCM 7670 / NBRC 15755 / NCIMB 13165 / 161).